A 102-amino-acid polypeptide reads, in one-letter code: Urease subunit beta (102 aa).

It belongs to the urease beta subunit family. As to quaternary structure, heterotrimer of UreA (gamma), UreB (beta) and UreC (alpha) subunits. Three heterotrimers associate to form the active enzyme.

The protein localises to the cytoplasm. It catalyses the reaction urea + 2 H2O + H(+) = hydrogencarbonate + 2 NH4(+). It participates in nitrogen metabolism; urea degradation; CO(2) and NH(3) from urea (urease route): step 1/1. The chain is Urease subunit beta from Methylobacillus flagellatus (strain ATCC 51484 / DSM 6875 / VKM B-1610 / KT).